A 300-amino-acid chain; its full sequence is Type 1 fimbrin D-mannose specific adhesin (300 aa).

An N-terminal signal peptide occupies residues 1–21 (MKRVITLFAVLLMGWSVNAWS).

This sequence belongs to the fimbrial protein family.

The protein localises to the fimbrium. Its function is as follows. Involved in regulation of length and mediation of adhesion of type 1 fimbriae (but not necessary for the production of fimbriae). Adhesin responsible for the binding to D-mannose. It is laterally positioned at intervals in the structure of the type 1 fimbriae. In order to integrate FimH in the fimbriae FimF and FimG are needed. This chain is Type 1 fimbrin D-mannose specific adhesin (fimH), found in Escherichia coli (strain K12).